The primary structure comprises 219 residues: 7-cyano-7-deazaguanine synthase (219 aa).

10 to 20 (FSGGQDSTTCL) provides a ligand contact to ATP. Residues Cys188, Cys196, Cys199, and Cys202 each coordinate Zn(2+).

This sequence belongs to the QueC family. The cofactor is Zn(2+).

The catalysed reaction is 7-carboxy-7-deazaguanine + NH4(+) + ATP = 7-cyano-7-deazaguanine + ADP + phosphate + H2O + H(+). Its pathway is purine metabolism; 7-cyano-7-deazaguanine biosynthesis. Its function is as follows. Catalyzes the ATP-dependent conversion of 7-carboxy-7-deazaguanine (CDG) to 7-cyano-7-deazaguanine (preQ(0)). This is 7-cyano-7-deazaguanine synthase from Neisseria gonorrhoeae (strain NCCP11945).